Consider the following 121-residue polypeptide: Large ribosomal subunit protein bL20 (121 aa).

Belongs to the bacterial ribosomal protein bL20 family.

Its function is as follows. Binds directly to 23S ribosomal RNA and is necessary for the in vitro assembly process of the 50S ribosomal subunit. It is not involved in the protein synthesizing functions of that subunit. The sequence is that of Large ribosomal subunit protein bL20 from Petrotoga mobilis (strain DSM 10674 / SJ95).